A 1485-amino-acid polypeptide reads, in one-letter code: DNA topoisomerase 2 (1485 aa).

Residues 1–16 (MSIDADFSDYEDEASG) are compositionally biased toward acidic residues. The disordered stretch occupies residues 1-76 (MSIDADFSDY…NGNGNSNVST (76 aa)). The segment covering 46-59 (DLRQTSLTSMTASE) has biased composition (polar residues). The span at 64–76 (VTNNGNGNSNVST) shows a compositional bias: low complexity. ATP-binding positions include asparagine 136, asparagine 165, 193–195 (SSN), and 206–213 (GRNGYGAK). The segment at 388–392 (KKENK) is interaction with DNA. An ATP-binding site is contributed by 421 to 423 (QTK). The region spanning 499–613 (CVLILTEGDS…SLLQIPGFLI (115 aa)) is the Toprim domain. Mg(2+)-binding residues include glutamate 505, aspartate 582, and aspartate 584. Positions 745 to 1195 (IPSVVDGLKP…TPKELWLHDL (451 aa)) constitute a Topo IIA-type catalytic domain. The active-site O-(5'-phospho-DNA)-tyrosine intermediate is the tyrosine 835. Positions 1019-1028 (KLSRTQATSN) are interaction with DNA. Positions 1216 to 1225 (EEQSSRDFVN) are enriched in basic and acidic residues. Residues 1216–1485 (EEQSSRDFVN…EDVDDYDESD (270 aa)) form a disordered region. Over residues 1226-1242 (RTKKKPRGKSTGTRKPR) the composition is skewed to basic residues. Residues 1260–1273 (ESKPSTTNRKQQTL) are compositionally biased toward polar residues. Over residues 1278-1307 (ASKEPEKSSDINIVKTEDNSHGLSVEENRI) the composition is skewed to basic and acidic residues. Phosphoserine occurs at positions 1310 and 1345. The segment covering 1387-1396 (AKNKGKKASS) has biased composition (basic residues). Positions 1413 to 1425 (GSSSTPKASSTNA) are enriched in polar residues. Serine 1433 carries the post-translational modification Phosphoserine. Over residues 1473-1485 (DNDEDVDDYDESD) the composition is skewed to acidic residues.

The protein belongs to the type II topoisomerase family. As to quaternary structure, homodimer. The cofactor is Mg(2+). Mn(2+) serves as cofactor. It depends on Ca(2+) as a cofactor. In terms of processing, phosphorylated at multiple sites at both extremities of the protein.

Its subcellular location is the nucleus. It catalyses the reaction ATP-dependent breakage, passage and rejoining of double-stranded DNA.. Its function is as follows. Control of topological states of DNA by transient breakage and subsequent rejoining of DNA strands. Topoisomerase II makes double-strand breaks. The chain is DNA topoisomerase 2 (top2) from Schizosaccharomyces pombe (strain 972 / ATCC 24843) (Fission yeast).